We begin with the raw amino-acid sequence, 127 residues long: Histone H2B type 1-A (127 aa).

Residues 1–36 (MPEVSSKGATISKKGFKKAVVKTQKKEGKKRKRTRK) form a disordered region. Position 2 is an N-acetylproline (P2). An N6-acetyllysine; alternate mark is found at K7, K13, K14, K17, K18, K22, and K25. Residues K7, K13, K14, K17, K18, K22, K25, and K36 each carry the N6-crotonyllysine; alternate modification. N6-lactoyllysine; alternate occurs at positions 7 and 13. Residue K7 forms a Glycyl lysine isopeptide (Lys-Gly) (interchain with G-Cter in SUMO2); alternate linkage. 4 positions are modified to N6-lactoyllysine; alternate: K17, K18, K22, and K25. Residue K22 forms a Glycyl lysine isopeptide (Lys-Gly) (interchain with G-Cter in SUMO2); alternate linkage. K36 is subject to N6-succinyllysine; alternate. A Glycyl lysine isopeptide (Lys-Gly) (interchain with G-Cter in ubiquitin); alternate cross-link involves residue K36. S38 bears the Phosphoserine mark. K45 carries the N6-lactoyllysine; alternate modification. N6-methyllysine is present on K48. An N6,N6-dimethyllysine modification is found at K59. Position 81 is a dimethylated arginine (R81). The residue at position 86 (S86) is a Phosphoserine. K87 carries the N6-acetyllysine; alternate modification. An N6-lactoyllysine; alternate modification is found at K87. K87 is subject to N6,N6,N6-trimethyllysine; alternate. Omega-N-methylarginine occurs at positions 88 and 94. K110 bears the N6-lactoyllysine; alternate mark. An N6-methyllysine modification is found at K110. Position 117 is a phosphothreonine (T117). An N6-lactoyllysine; alternate mark is found at K118 and K122. N6-succinyllysine; alternate occurs at positions 118 and 122. At K118 the chain carries N6-methylated lysine; alternate. A Glycyl lysine isopeptide (Lys-Gly) (interchain with G-Cter in ubiquitin); alternate cross-link involves residue K122.

It belongs to the histone H2B family. As to quaternary structure, the nucleosome is a histone octamer containing two molecules each of H2A, H2B, H3 and H4 assembled in one H3-H4 heterotetramer and two H2A-H2B heterodimers. Post-translationally, monoubiquitination at Lys-36 (H2BK34Ub) by the MSL1/MSL2 dimer is required for histone H3 'Lys-4' (H3K4me) and 'Lys-79' (H3K79me) methylation and transcription activation at specific gene loci, such as HOXA9 and MEIS1 loci. Similarly, monoubiquitination at Lys-122 (H2BK120Ub) by the RNF20/40 complex gives a specific tag for epigenetic transcriptional activation and is also prerequisite for histone H3 'Lys-4' and 'Lys-79' methylation. It also functions cooperatively with the FACT dimer to stimulate elongation by RNA polymerase II. H2BK120Ub also acts as a regulator of mRNA splicing: deubiquitination by USP49 is required for efficient cotranscriptional splicing of a large set of exons. In terms of processing, crotonylation (Kcr) is specifically present in male germ cells and marks testis-specific genes in post-meiotic cells, including X-linked genes that escape sex chromosome inactivation in haploid cells. Crotonylation marks active promoters and enhancers and confers resistance to transcriptional repressors. It is also associated with post-meiotically activated genes on autosomes. Acetylated during spermatogenesis. Acetylated form is most abundant in spermatogonia compared to spermatocytes and round spermatids. Post-translationally, phosphorylated at Thr-117 in spermatogonia, spermatocytes and round spermatids. In terms of processing, methylated at Lys-118 in spermatogonia, spermatocytes and round spermatids. Lactylated in macrophages by EP300/P300 by using lactoyl-CoA directly derived from endogenous or exogenous lactate, leading to stimulates gene transcription. In terms of tissue distribution, mainly expressed in testis, and the corresponding protein is also present in mature sperm (at protein level). Also found in some fat cells.

The protein resides in the nucleus. The protein localises to the chromosome. Variant histone specifically required to direct the transformation of dissociating nucleosomes to protamine in male germ cells. Entirely replaces classical histone H2B prior nucleosome to protamine transition and probably acts as a nucleosome dissociating factor that creates a more dynamic chromatin, facilitating the large-scale exchange of histones. Core component of nucleosome. Nucleosomes wrap and compact DNA into chromatin, limiting DNA accessibility to the cellular machineries which require DNA as a template. Histones thereby play a central role in transcription regulation, DNA repair, DNA replication and chromosomal stability. DNA accessibility is regulated via a complex set of post-translational modifications of histones, also called histone code, and nucleosome remodeling. Also found in fat cells, its function and the presence of post-translational modifications specific to such cells are still unclear. This chain is Histone H2B type 1-A, found in Homo sapiens (Human).